We begin with the raw amino-acid sequence, 87 residues long: MVNVKASMFLTFAGLVLLFVVCYASESEEKEFPKEMLSSIFAVDNDFKQEERDCAGYMRECKEKLCCSGYVCSSRWKWCVLPAPWRR.

Residues 1–24 form the signal peptide; the sequence is MVNVKASMFLTFAGLVLLFVVCYA. The propeptide occupies 25–52; that stretch reads SESEEKEFPKEMLSSIFAVDNDFKQEER. Disulfide bonds link cysteine 54/cysteine 67, cysteine 61/cysteine 72, and cysteine 66/cysteine 79.

This sequence belongs to the neurotoxin 10 (Hwtx-1) family. 51 (Hntx-8) subfamily. Hntx-8 sub-subfamily. In terms of tissue distribution, expressed by the venom gland.

It is found in the secreted. Its function is as follows. Ion channel inhibitor. This chain is U3-theraphotoxin-Hhn1a 17, found in Cyriopagopus hainanus (Chinese bird spider).